The following is a 230-amino-acid chain: Enolase-phosphatase E1 (230 aa).

The protein belongs to the HAD-like hydrolase superfamily. MasA/MtnC family. As to quaternary structure, monomer. Requires Mg(2+) as cofactor.

The enzyme catalyses 5-methylsulfanyl-2,3-dioxopentyl phosphate + H2O = 1,2-dihydroxy-5-(methylsulfanyl)pent-1-en-3-one + phosphate. Its pathway is amino-acid biosynthesis; L-methionine biosynthesis via salvage pathway; L-methionine from S-methyl-5-thio-alpha-D-ribose 1-phosphate: step 3/6. It participates in amino-acid biosynthesis; L-methionine biosynthesis via salvage pathway; L-methionine from S-methyl-5-thio-alpha-D-ribose 1-phosphate: step 4/6. Functionally, bifunctional enzyme that catalyzes the enolization of 2,3-diketo-5-methylthiopentyl-1-phosphate (DK-MTP-1-P) into the intermediate 2-hydroxy-3-keto-5-methylthiopentenyl-1-phosphate (HK-MTPenyl-1-P), which is then dephosphorylated to form the acireductone 1,2-dihydroxy-3-keto-5-methylthiopentene (DHK-MTPene). This is Enolase-phosphatase E1 from Bradyrhizobium sp. (strain BTAi1 / ATCC BAA-1182).